Consider the following 427-residue polypeptide: Citrate synthase (427 aa).

Position 283 is an N6-acetyllysine (Lys283). Active-site residues include His306 and Asp363.

It belongs to the citrate synthase family. Homohexamer.

The catalysed reaction is oxaloacetate + acetyl-CoA + H2O = citrate + CoA + H(+). It functions in the pathway carbohydrate metabolism; tricarboxylic acid cycle; isocitrate from oxaloacetate: step 1/2. In Escherichia coli O6:H1 (strain CFT073 / ATCC 700928 / UPEC), this protein is Citrate synthase (gltA).